The primary structure comprises 544 residues: Chaperonin GroEL 2 (544 aa).

ATP-binding positions include 29–32, 86–90, Gly413, and Asp495; these read TLGP and DGTTT. The interval 525–544 is disordered; the sequence is PEPKSNKPAGGGGGVDDYDY. Residues 533–544 show a composition bias toward gly residues; it reads AGGGGGVDDYDY.

It belongs to the chaperonin (HSP60) family. As to quaternary structure, forms a cylinder of 14 subunits composed of two heptameric rings stacked back-to-back. Interacts with the co-chaperonin GroES.

The protein localises to the cytoplasm. It carries out the reaction ATP + H2O + a folded polypeptide = ADP + phosphate + an unfolded polypeptide.. In terms of biological role, together with its co-chaperonin GroES, plays an essential role in assisting protein folding. The GroEL-GroES system forms a nano-cage that allows encapsulation of the non-native substrate proteins and provides a physical environment optimized to promote and accelerate protein folding. This Synechococcus sp. (strain JA-3-3Ab) (Cyanobacteria bacterium Yellowstone A-Prime) protein is Chaperonin GroEL 2.